The chain runs to 301 residues: GTP cyclohydrolase FolE2 (301 aa).

The protein belongs to the GTP cyclohydrolase IV family.

The catalysed reaction is GTP + H2O = 7,8-dihydroneopterin 3'-triphosphate + formate + H(+). It participates in cofactor biosynthesis; 7,8-dihydroneopterin triphosphate biosynthesis; 7,8-dihydroneopterin triphosphate from GTP: step 1/1. Converts GTP to 7,8-dihydroneopterin triphosphate. This is GTP cyclohydrolase FolE2 from Pseudomonas syringae pv. syringae (strain B728a).